The primary structure comprises 333 residues: uncharacterized protein (333 aa).

The region spanning 45-318 (NVIVSDSMFI…EYVKIIHPKI (274 aa)) is the Fe/B12 periplasmic-binding domain.

This is an uncharacterized protein from Methanocaldococcus jannaschii (strain ATCC 43067 / DSM 2661 / JAL-1 / JCM 10045 / NBRC 100440) (Methanococcus jannaschii).